The primary structure comprises 218 residues: Thiopurine S-methyltransferase (218 aa).

Trp-10, Leu-45, Glu-66, and Arg-123 together coordinate S-adenosyl-L-methionine.

The protein belongs to the class I-like SAM-binding methyltransferase superfamily. TPMT family.

Its subcellular location is the cytoplasm. It catalyses the reaction S-adenosyl-L-methionine + a thiopurine = S-adenosyl-L-homocysteine + a thiopurine S-methylether.. This chain is Thiopurine S-methyltransferase, found in Shewanella baltica (strain OS223).